The primary structure comprises 560 residues: Nitrite reductase (560 aa).

The first 26 residues, 1 to 26 (MSNVGKPILAGLIAGLSLLGLAVAQA), serve as a signal peptide directing secretion. The N-terminal tail stretch occupies residues 27 to 29 (AAP). Positions 30-126 (EMTAEEKEAS…ARYIQHTPDI (97 aa)) constitute a Cytochrome c domain. Cys-47, Cys-50, and His-51 together coordinate heme c. Positions 61–80 (KNLEPHWSKTEADGKKTEGG) are disordered. Residues 63–78 (LEPHWSKTEADGKKTE) show a composition bias toward basic and acidic residues. Residues Thr-97 and Met-101 each contribute to the heme c site. The tract at residues 127–560 (PPEFSLQDMK…NVFNTMNDVY (434 aa)) is D1-heme domain. The heme d1 site is built by His-193, Arg-236, Ser-237, Tyr-256, Arg-382, and Gln-500.

Homodimer in solution. The cofactor is heme c. Heme serves as cofactor.

Its subcellular location is the periplasm. It catalyses the reaction nitric oxide + Fe(III)-[cytochrome c] + H2O = Fe(II)-[cytochrome c] + nitrite + 2 H(+). The catalysed reaction is A + NH4(+) + H2O = hydroxylamine + AH2 + H(+). In Stutzerimonas stutzeri (Pseudomonas stutzeri), this protein is Nitrite reductase (nirS).